The sequence spans 592 residues: Cytosolic purine 5'-nucleotidase (592 aa).

The span at 1–15 shows a compositional bias: low complexity; it reads MAENNNNNNNNNNNN. Positions 1-37 are disordered; sequence MAENNNNNNNNNNNNVSTPPHQKPHLTTGLRTSSSGL. Asp122 functions as the Nucleophile in the catalytic mechanism. IMP contacts are provided by Asp122 and Asp124. The Mg(2+) site is built by Asp122 and Asp124. Asp124 acts as the Proton donor in catalysis. Residue Asn226 coordinates ATP. The tract at residues 252–273 is disordered; that stretch reads LTEEVADEQQQMNSPPLSSLGS. Residues 259–273 show a composition bias toward polar residues; the sequence is EQQQMNSPPLSSLGS. IMP is bound by residues Arg299, Asp303, Lys312, Thr347, Asn348, Ser349, and Lys385. Asp444 provides a ligand contact to Mg(2+). Positions 547 and 550 each coordinate ATP.

It belongs to the 5'(3')-deoxyribonucleotidase family. Homotetramer. Mg(2+) serves as cofactor.

It is found in the cytoplasm. Its subcellular location is the cytosol. The catalysed reaction is a ribonucleoside 5'-phosphate + H2O = a ribonucleoside + phosphate. It carries out the reaction a 2'-deoxyribonucleoside + a ribonucleoside 5'-phosphate = a ribonucleoside + a 2'-deoxyribonucleoside 5'-phosphate. In terms of biological role, broad specificity cytosolic 5'-nucleotidase that catalyzes the dephosphorylation of 6-hydroxypurine nucleoside 5'-monophosphates. In addition, possesses a phosphotransferase activity by which it can transfer a phosphate from a donor nucleoside monophosphate to an acceptor nucleoside. Through these activities regulates the purine nucleoside/nucleotide pools within the cell. This chain is Cytosolic purine 5'-nucleotidase (nt5c2), found in Dictyostelium discoideum (Social amoeba).